A 307-amino-acid chain; its full sequence is Ribosomal RNA small subunit methyltransferase A (307 aa).

Asparagine 35, valine 37, glycine 62, glutamate 83, aspartate 113, and asparagine 136 together coordinate S-adenosyl-L-methionine.

This sequence belongs to the class I-like SAM-binding methyltransferase superfamily. rRNA adenine N(6)-methyltransferase family. RsmA subfamily.

The protein resides in the cytoplasm. The catalysed reaction is adenosine(1518)/adenosine(1519) in 16S rRNA + 4 S-adenosyl-L-methionine = N(6)-dimethyladenosine(1518)/N(6)-dimethyladenosine(1519) in 16S rRNA + 4 S-adenosyl-L-homocysteine + 4 H(+). In terms of biological role, specifically dimethylates two adjacent adenosines (A1518 and A1519) in the loop of a conserved hairpin near the 3'-end of 16S rRNA in the 30S particle. May play a critical role in biogenesis of 30S subunits. This is Ribosomal RNA small subunit methyltransferase A from Bifidobacterium longum subsp. infantis (strain ATCC 15697 / DSM 20088 / JCM 1222 / NCTC 11817 / S12).